We begin with the raw amino-acid sequence, 135 residues long: MSKEFSRTQRVSQQLQKELAVMLQREVRDSRIGMVTISDVEVSRDLAYAKVFVTFFCVGDQTPESSLAALKEHEPSLRMMLGKRIRLRLTPEIRFTYDNTLVEGMRMSNLVTDVVNTDKRKMAESGRTESDEGEE.

Belongs to the RbfA family. Monomer. Binds 30S ribosomal subunits, but not 50S ribosomal subunits or 70S ribosomes.

It is found in the cytoplasm. In terms of biological role, one of several proteins that assist in the late maturation steps of the functional core of the 30S ribosomal subunit. Associates with free 30S ribosomal subunits (but not with 30S subunits that are part of 70S ribosomes or polysomes). Required for efficient processing of 16S rRNA. May interact with the 5'-terminal helix region of 16S rRNA. The protein is Ribosome-binding factor A of Aliivibrio fischeri (strain MJ11) (Vibrio fischeri).